Consider the following 202-residue polypeptide: N-acetyltransferase 9-like protein (202 aa).

An N-acetyltransferase domain is found at 34-184 (EEIRRLTGSE…FTFELPKNRL (151 aa)).

This sequence belongs to the acetyltransferase family. GNAT subfamily.

This chain is N-acetyltransferase 9-like protein, found in Caenorhabditis elegans.